We begin with the raw amino-acid sequence, 320 residues long: Acyl-coenzyme A thioesterase 8 (320 aa).

Active-site charge relay system residues include aspartate 233, serine 255, and glutamine 305. The Microbody targeting signal signature appears at 318–320; the sequence is SKL.

It belongs to the C/M/P thioester hydrolase family. In terms of assembly, homodimer. Ubiquitous.

Its subcellular location is the peroxisome matrix. The enzyme catalyses choloyl-CoA + H2O = cholate + CoA + H(+). The catalysed reaction is chenodeoxycholoyl-CoA + H2O = chenodeoxycholate + CoA + H(+). It carries out the reaction acetyl-CoA + H2O = acetate + CoA + H(+). It catalyses the reaction malonyl-CoA + H2O = malonate + CoA + H(+). The enzyme catalyses acetoacetyl-CoA + H2O = acetoacetate + CoA + H(+). The catalysed reaction is propanoyl-CoA + H2O = propanoate + CoA + H(+). It carries out the reaction butanoyl-CoA + H2O = butanoate + CoA + H(+). It catalyses the reaction succinyl-CoA + H2O = succinate + CoA + H(+). The enzyme catalyses glutaryl-CoA + H2O = glutarate + CoA + H(+). The catalysed reaction is hexanoyl-CoA + H2O = hexanoate + CoA + H(+). It carries out the reaction hexanedioyl-CoA + H2O = hexanedioate + CoA + H(+). It catalyses the reaction octanoyl-CoA + H2O = octanoate + CoA + H(+). The enzyme catalyses octanedioyl-CoA + H2O = octanedioate + CoA + H(+). The catalysed reaction is decanoyl-CoA + H2O = decanoate + CoA + H(+). It carries out the reaction decanedioyl-CoA + H2O = decanedioate + CoA + H(+). It catalyses the reaction dodecanoyl-CoA + H2O = dodecanoate + CoA + H(+). The enzyme catalyses dodecanedioyl-CoA + H2O = dodecanedioate + CoA + H(+). The catalysed reaction is tetradecanoyl-CoA + H2O = tetradecanoate + CoA + H(+). It carries out the reaction (9Z)-tetradecenoyl-CoA + H2O = (9Z)-tetradecenoate + CoA + H(+). It catalyses the reaction hexadecanoyl-CoA + H2O = hexadecanoate + CoA + H(+). The enzyme catalyses (9Z)-hexadecenoyl-CoA + H2O = (9Z)-hexadecenoate + CoA + H(+). The catalysed reaction is octadecanoyl-CoA + H2O = octadecanoate + CoA + H(+). It carries out the reaction (9Z)-octadecenoyl-CoA + H2O = (9Z)-octadecenoate + CoA + H(+). It catalyses the reaction (9Z,12Z)-octadecadienoyl-CoA + H2O = (9Z,12Z)-octadecadienoate + CoA + H(+). The enzyme catalyses eicosanoyl-CoA + H2O = eicosanoate + CoA + H(+). The catalysed reaction is (5Z,8Z,11Z,14Z)-eicosatetraenoyl-CoA + H2O = (5Z,8Z,11Z,14Z)-eicosatetraenoate + CoA + H(+). It carries out the reaction 4,8-dimethylnonanoyl-CoA + H2O = 4,8-dimethylnonanoate + CoA + H(+). It catalyses the reaction 2,6-dimethylheptanoyl-CoA + H2O = 2,6-dimethylheptanoate + CoA + H(+). The enzyme catalyses (3S)-3-hydroxy-3-methylglutaryl-CoA + H2O = 3-hydroxy-3-methylglutarate + CoA + H(+). The catalysed reaction is 3alpha,7alpha,12alpha-trihydroxy-5beta-cholestan-26-oyl-CoA + H2O = 3alpha,7alpha,12alpha-trihydroxy-5beta-cholestan-26-oate + CoA + H(+). It carries out the reaction 2-methyloctadecanoyl-CoA + H2O = 2-methyloctadecanoate + CoA + H(+). It catalyses the reaction prostaglandin F2alpha-CoA + H2O = prostaglandin F2alpha + CoA + H(+). It participates in lipid metabolism; fatty acid metabolism. Inhibited by CoASH (IC(50)=10-15 uM). Also inhibited by cysteine-reactive agents. In terms of biological role, catalyzes the hydrolysis of acyl-CoAs into free fatty acids and coenzyme A (CoASH), regulating their respective intracellular levels. Displays no strong substrate specificity with respect to the carboxylic acid moiety of Acyl-CoAs. Hydrolyzes medium length (C2 to C20) straight-chain, saturated and unsaturated acyl-CoAS but is inactive towards substrates with longer aliphatic chains. Moreover, it catalyzes the hydrolysis of CoA esters of bile acids, such as choloyl-CoA and chenodeoxycholoyl-CoA and competes with bile acid CoA:amino acid N-acyltransferase (BAAT). Is also able to hydrolyze CoA esters of dicarboxylic acids. It is involved in the metabolic regulation of peroxisome proliferation. This Mus musculus (Mouse) protein is Acyl-coenzyme A thioesterase 8 (Acot8).